A 399-amino-acid chain; its full sequence is S-adenosylmethionine synthase (399 aa).

His17 is an ATP binding site. Residue Asp19 coordinates Mg(2+). Glu45 contacts K(+). Residues Glu58 and Gln101 each coordinate L-methionine. The interval 101-111 is flexible loop; sequence QSPDIAQGVDE. Residues 177-179, 244-245, Asp253, 259-260, Ala276, and Lys280 contribute to the ATP site; these read DAK, RF, and RK. Asp253 provides a ligand contact to L-methionine. An L-methionine-binding site is contributed by Lys284.

Belongs to the AdoMet synthase family. As to quaternary structure, homotetramer; dimer of dimers. Requires Mg(2+) as cofactor. The cofactor is K(+).

It localises to the cytoplasm. It catalyses the reaction L-methionine + ATP + H2O = S-adenosyl-L-methionine + phosphate + diphosphate. It participates in amino-acid biosynthesis; S-adenosyl-L-methionine biosynthesis; S-adenosyl-L-methionine from L-methionine: step 1/1. Functionally, catalyzes the formation of S-adenosylmethionine (AdoMet) from methionine and ATP. The overall synthetic reaction is composed of two sequential steps, AdoMet formation and the subsequent tripolyphosphate hydrolysis which occurs prior to release of AdoMet from the enzyme. This Listeria monocytogenes serovar 1/2a (strain ATCC BAA-679 / EGD-e) protein is S-adenosylmethionine synthase.